Here is a 406-residue protein sequence, read N- to C-terminus: uncharacterized protein (406 aa).

The protein resides in the plastid. It is found in the chloroplast. This is an uncharacterized protein from Euglena gracilis.